The primary structure comprises 511 residues: GMP synthase [glutamine-hydrolyzing] (511 aa).

A Glutamine amidotransferase type-1 domain is found at 5–195 (DILVLDFGSQ…AKYACNCESV (191 aa)). The active-site Nucleophile is C82. Catalysis depends on residues H169 and E171. Residues 196-386 (WNMGSFAKTQ…LGLSKEVVYR (191 aa)) form the GMPS ATP-PPase domain. 223–229 (SGGVDSS) provides a ligand contact to ATP.

As to quaternary structure, homodimer.

The enzyme catalyses XMP + L-glutamine + ATP + H2O = GMP + L-glutamate + AMP + diphosphate + 2 H(+). It participates in purine metabolism; GMP biosynthesis; GMP from XMP (L-Gln route): step 1/1. Its function is as follows. Catalyzes the synthesis of GMP from XMP. This chain is GMP synthase [glutamine-hydrolyzing], found in Campylobacter jejuni subsp. jejuni serotype O:23/36 (strain 81-176).